Consider the following 100-residue polypeptide: Urease subunit gamma (100 aa).

It belongs to the urease gamma subunit family. In terms of assembly, heterotrimer of UreA (gamma), UreB (beta) and UreC (alpha) subunits. Three heterotrimers associate to form the active enzyme.

The protein localises to the cytoplasm. The catalysed reaction is urea + 2 H2O + H(+) = hydrogencarbonate + 2 NH4(+). Its pathway is nitrogen metabolism; urea degradation; CO(2) and NH(3) from urea (urease route): step 1/1. Functionally, expression of the urease operon increases the likelihood of bacterial survival by contributing to acid resistance in vitro and in vivo in BALB/c mice. Y.enterocolitica enters the body via an oral path and must survive the acidic stomach before being able to colonize the intestinal mucosa. The protein is Urease subunit gamma of Yersinia enterocolitica.